Reading from the N-terminus, the 238-residue chain is Sugar fermentation stimulation protein homolog (238 aa).

This sequence belongs to the SfsA family.

The protein is Sugar fermentation stimulation protein homolog of Alkalilimnicola ehrlichii (strain ATCC BAA-1101 / DSM 17681 / MLHE-1).